A 348-amino-acid chain; its full sequence is UDP-rhamnose/UDP-galactose transporter 2 (348 aa).

The next 10 membrane-spanning stretches (helical) occupy residues 12 to 32 (AVSDVGAWAMNVTSSVGIIMA), 44 to 64 (FSFATTLTGFHFALTALVGMV), 81 to 101 (LLWFSLVANISIAAMNFSLML), 104 to 124 (VGFYQISKLSMIPVVCVMEWV), 133 to 153 (EVKASVMVVVVGVGICTVTDV), 160 to 180 (FICACTAVFSTSLQQISIGSL), 196 to 216 (APIQAISLLIFGPFVDYFLSG), 230 to 250 (LCILLSCALAVFCNISQYLCI), 257 to 277 (SFQVLGHMKTVCVLTLGWLIF), and 286 to 306 (IAGMVLAVVGMVIYSWAVELE).

The protein belongs to the TPT transporter family. TPT (TC 2.A.7.9) subfamily.

It is found in the golgi apparatus membrane. Functionally, nucleotide-sugar transporter that transports UDP-rhamnose or UDP-galactose and UMP in a strict counter-exchange mode. The sequence is that of UDP-rhamnose/UDP-galactose transporter 2 from Arabidopsis thaliana (Mouse-ear cress).